A 579-amino-acid chain; its full sequence is Keratinocyte proline-rich protein (579 aa).

A Phosphoserine modification is found at Ser394. Positions Glu526–Phe579 are disordered. Residues Phe551–Gly561 are compositionally biased toward basic and acidic residues.

Expressed in the upper layer of epidermis and psoriasis (at protein level). Expressed in the upper layer of epidermis and psoriasis.

The protein resides in the cytoplasm. The protein is Keratinocyte proline-rich protein (KPRP) of Homo sapiens (Human).